The chain runs to 110 residues: Cell cycle protein GpsB (110 aa).

The stretch at 32-73 (LDDVIKDYENYLEQIEKLQMENRRLQQALDKKESEASNVRNS) forms a coiled coil.

It belongs to the GpsB family. In terms of assembly, forms polymers through the coiled coil domains. Interacts with PBP1, MreC and EzrA.

It localises to the cytoplasm. Functionally, divisome component that associates with the complex late in its assembly, after the Z-ring is formed, and is dependent on DivIC and PBP2B for its recruitment to the divisome. Together with EzrA, is a key component of the system that regulates PBP1 localization during cell cycle progression. Its main role could be the removal of PBP1 from the cell pole after pole maturation is completed. Also contributes to the recruitment of PBP1 to the division complex. Not essential for septum formation. This Streptococcus agalactiae serotype Ia (strain ATCC 27591 / A909 / CDC SS700) protein is Cell cycle protein GpsB.